Reading from the N-terminus, the 347-residue chain is Trace amine-associated receptor 4 (347 aa).

The Extracellular portion of the chain corresponds to 1–37 (MNSPDLWYSPETQFCFAAANNSCPRKARPALVVCAMY). Asn-20 carries N-linked (GlcNAc...) asparagine glycosylation. Intrachain disulfides connect Cys-23-Cys-187 and Cys-106-Cys-191. The helical transmembrane segment at 38–58 (LVMIGAIVMTMLGNMVVIISI) threads the bilayer. The Cytoplasmic portion of the chain corresponds to 59 to 69 (AHFKQLHSPTN). A helical membrane pass occupies residues 70–90 (FLILSMATTDFLLSCVVMPFS). The Extracellular portion of the chain corresponds to 91-110 (MVRSIESCWYFGDLFCKVHS). A helical transmembrane segment spans residues 111-129 (CCDIMLCTTSIFHLCFISV). At 130–149 (DRHYAVCDPLHYVTQITVGV) the chain is on the cytoplasmic side. The chain crosses the membrane as a helical span at residues 150–170 (VGVFLLISWSVPILFAFGLVF). Residues 171–197 (SELNLIGAEDFVAAIDCTGLCVLIFNK) are Extracellular-facing. Positions 175–188 (LIGAEDFVAAIDCT) are extracellular Loop 2 (ECL2). Residues 198–218 (LWGVLASFIAFFLPGAIMVGI) form a helical membrane-spanning segment. At 219–260 (YIHIFTVARKHARKIGPGPRTKRALSESKMKATSGKESKATK) the chain is on the cytoplasmic side. Residues 261–281 (TLSIVMGVFVLCWLPFFVLTI) form a helical membrane-spanning segment. At 282–296 (TDPFIGFTTPEDLYN) the chain is on the extracellular side. A helical membrane pass occupies residues 297–317 (VFLWLGYFNSTFNPIIYGMFY). Over 318–347 (PWFRKALRMIVTGTIFRSDSSTSSLHPAHP) the chain is Cytoplasmic.

This sequence belongs to the G-protein coupled receptor 1 family.

It localises to the cell membrane. Functionally, olfactory receptor specific for 2-phenylethylamine, a trace amine present at high concentration in the urine of carnivore species, playing a key role in fear and avoidance responses. 2-phenylethylamine acts as a kairomone in the chemical detection of carnivore odor and triggers fear in rats. This receptor is probably mediated by the G(s)-class of G-proteins which activate adenylate cyclase. In Rattus norvegicus (Rat), this protein is Trace amine-associated receptor 4.